Reading from the N-terminus, the 311-residue chain is ATP synthase gamma chain (311 aa).

It belongs to the ATPase gamma chain family. In terms of assembly, F-type ATPases have 2 components, CF(1) - the catalytic core - and CF(0) - the membrane proton channel. CF(1) has five subunits: alpha(3), beta(3), gamma(1), delta(1), epsilon(1). CF(0) has three main subunits: a, b and c.

The protein localises to the cell membrane. In terms of biological role, produces ATP from ADP in the presence of a proton gradient across the membrane. The gamma chain is believed to be important in regulating ATPase activity and the flow of protons through the CF(0) complex. This is ATP synthase gamma chain from Limosilactobacillus fermentum (strain NBRC 3956 / LMG 18251) (Lactobacillus fermentum).